Reading from the N-terminus, the 90-residue chain is Co-chaperonin GroES (90 aa).

Belongs to the GroES chaperonin family. As to quaternary structure, heptamer of 7 subunits arranged in a ring. Interacts with the chaperonin GroEL.

The protein localises to the cytoplasm. Functionally, together with the chaperonin GroEL, plays an essential role in assisting protein folding. The GroEL-GroES system forms a nano-cage that allows encapsulation of the non-native substrate proteins and provides a physical environment optimized to promote and accelerate protein folding. GroES binds to the apical surface of the GroEL ring, thereby capping the opening of the GroEL channel. This Fusobacterium nucleatum subsp. nucleatum (strain ATCC 25586 / DSM 15643 / BCRC 10681 / CIP 101130 / JCM 8532 / KCTC 2640 / LMG 13131 / VPI 4355) protein is Co-chaperonin GroES.